The primary structure comprises 358 residues: Phospho-N-acetylmuramoyl-pentapeptide-transferase (358 aa).

10 helical membrane-spanning segments follow: residues alanine 28 to leucine 48, threonine 70 to alanine 90, leucine 92 to phenylalanine 112, methionine 133 to tyrosine 153, valine 165 to serine 185, glycine 196 to threonine 216, valine 233 to phenylalanine 253, valine 260 to leucine 280, leucine 285 to valine 305, and lysine 335 to leucine 355.

Belongs to the glycosyltransferase 4 family. MraY subfamily. The cofactor is Mg(2+).

It localises to the cell inner membrane. It catalyses the reaction UDP-N-acetyl-alpha-D-muramoyl-L-alanyl-gamma-D-glutamyl-meso-2,6-diaminopimeloyl-D-alanyl-D-alanine + di-trans,octa-cis-undecaprenyl phosphate = di-trans,octa-cis-undecaprenyl diphospho-N-acetyl-alpha-D-muramoyl-L-alanyl-D-glutamyl-meso-2,6-diaminopimeloyl-D-alanyl-D-alanine + UMP. It functions in the pathway cell wall biogenesis; peptidoglycan biosynthesis. Its function is as follows. Catalyzes the initial step of the lipid cycle reactions in the biosynthesis of the cell wall peptidoglycan: transfers peptidoglycan precursor phospho-MurNAc-pentapeptide from UDP-MurNAc-pentapeptide onto the lipid carrier undecaprenyl phosphate, yielding undecaprenyl-pyrophosphoryl-MurNAc-pentapeptide, known as lipid I. The protein is Phospho-N-acetylmuramoyl-pentapeptide-transferase of Desulfovibrio desulfuricans (strain ATCC 27774 / DSM 6949 / MB).